The chain runs to 141 residues: Large ribosomal subunit protein uL11 (141 aa).

This sequence belongs to the universal ribosomal protein uL11 family. Part of the ribosomal stalk of the 50S ribosomal subunit. Interacts with L10 and the large rRNA to form the base of the stalk. L10 forms an elongated spine to which L12 dimers bind in a sequential fashion forming a multimeric L10(L12)X complex.

In terms of biological role, forms part of the ribosomal stalk which helps the ribosome interact with GTP-bound translation factors. This is Large ribosomal subunit protein uL11 from Acidianus ambivalens (Desulfurolobus ambivalens).